The primary structure comprises 383 residues: Chitinase-3-like protein 1 (383 aa).

An N-terminal signal peptide occupies residues 1 to 21 (MGLRVAQTGFVVLVLLQSCAA). The GH18 domain maps to 22–383 (YKLICYYTSW…NAIKDVLAGV (362 aa)). Cysteine 26 and cysteine 51 are joined by a disulfide. Residue asparagine 60 is glycosylated (N-linked (GlcNAc...) asparagine). Chitin contacts are provided by residues 70–71 (EW), 97–100 (GGWN), tyrosine 141, 204–207 (LTYD), and lysine 263. Cysteine 300 and cysteine 364 form a disulfide bridge. Residues 324-338 (QWVAYDDQESVKNKA) are important for AKT1 activation and IL8 production. Tryptophan 352 provides a ligand contact to chitin.

It belongs to the glycosyl hydrolase 18 family. In terms of assembly, monomer. As to expression, detected in mammary gland.

It is found in the secreted. It localises to the extracellular space. The protein localises to the cytoplasm. The protein resides in the perinuclear region. Its subcellular location is the endoplasmic reticulum. Its function is as follows. Carbohydrate-binding lectin with a preference for chitin. Has no chitinase activity. May play a role in tissue remodeling and in the capacity of cells to respond to and cope with changes in their environment. Plays a role in T-helper cell type 2 (Th2) inflammatory response and IL-13-induced inflammation, regulating allergen sensitization, inflammatory cell apoptosis, dendritic cell accumulation and M2 macrophage differentiation. Facilitates invasion of pathogenic enteric bacteria into colonic mucosa and lymphoid organs. Mediates activation of AKT1 signaling pathway and subsequent IL8 production in colonic epithelial cells. Regulates antibacterial responses in lung by contributing to macrophage bacterial killing, controlling bacterial dissemination and augmenting host tolerance. Also regulates hyperoxia-induced injury, inflammation and epithelial apoptosis in lung. This chain is Chitinase-3-like protein 1 (CHI3L1), found in Bubalus bubalis (Domestic water buffalo).